We begin with the raw amino-acid sequence, 373 residues long: 3-dehydroquinate synthase (373 aa).

NAD(+) is bound by residues 67 to 72, 101 to 105, 125 to 126, lysine 138, and lysine 147; these read EGEETK, GVILD, and TT. 3 residues coordinate Zn(2+): glutamate 180, histidine 240, and histidine 256.

This sequence belongs to the sugar phosphate cyclases superfamily. Dehydroquinate synthase family. Requires NAD(+) as cofactor. Co(2+) serves as cofactor. It depends on Zn(2+) as a cofactor.

It is found in the cytoplasm. The catalysed reaction is 7-phospho-2-dehydro-3-deoxy-D-arabino-heptonate = 3-dehydroquinate + phosphate. It functions in the pathway metabolic intermediate biosynthesis; chorismate biosynthesis; chorismate from D-erythrose 4-phosphate and phosphoenolpyruvate: step 2/7. Its function is as follows. Catalyzes the conversion of 3-deoxy-D-arabino-heptulosonate 7-phosphate (DAHP) to dehydroquinate (DHQ). The polypeptide is 3-dehydroquinate synthase (Chlamydia trachomatis serovar A (strain ATCC VR-571B / DSM 19440 / HAR-13)).